The primary structure comprises 525 residues: GMP synthase [glutamine-hydrolyzing] (525 aa).

The 199-residue stretch at 9–207 folds into the Glutamine amidotransferase type-1 domain; that stretch reads RILILDFGSQ…VRDICQCEAL (199 aa). Cysteine 86 functions as the Nucleophile in the catalytic mechanism. Residues histidine 181 and glutamate 183 contribute to the active site. Residues 208 to 400 enclose the GMPS ATP-PPase domain; that stretch reads WTPAKIIDDA…LGLPYDMLYR (193 aa). 235–241 is a binding site for ATP; it reads SGGVDSS.

As to quaternary structure, homodimer.

The enzyme catalyses XMP + L-glutamine + ATP + H2O = GMP + L-glutamate + AMP + diphosphate + 2 H(+). It participates in purine metabolism; GMP biosynthesis; GMP from XMP (L-Gln route): step 1/1. Its function is as follows. Catalyzes the synthesis of GMP from XMP. The protein is GMP synthase [glutamine-hydrolyzing] of Escherichia coli (strain K12 / MC4100 / BW2952).